A 235-amino-acid polypeptide reads, in one-letter code: MNGVFDLGGTDGIGPVDPPAEEPVFRADWEKAAFTMFSALFRAGWFGIDEFRHGVEKMDPALYLKSPYYKHWIASFEYHGKRTGKLDLAELDRRTQYYLANPDAPLPEHGPNQELIDFANAVVPSGAPAIRPTDKEPRFKIGDVVRMSSDVPFGHTRIAGYVRGKVGRVISHHGSFVYPDSAGNGRGDDPQHLYTLQFDATELWGEQYAEPNVTTTFDAWDPYLTLVTAPEGAAA.

The protein belongs to the nitrile hydratase subunit beta family. Heterodimer of an alpha and a beta chain.

It catalyses the reaction an aliphatic primary amide = an aliphatic nitrile + H2O. Its function is as follows. NHase catalyzes the hydration of various nitrile compounds to the corresponding amides. This chain is Nitrile hydratase subunit beta (nthB), found in Rhodococcus sp.